A 256-amino-acid polypeptide reads, in one-letter code: Deoxyribose-phosphate aldolase (256 aa).

Asp-102 serves as the catalytic Proton donor/acceptor. Lys-165 acts as the Schiff-base intermediate with acetaldehyde in catalysis. The active-site Proton donor/acceptor is the Lys-197.

This sequence belongs to the DeoC/FbaB aldolase family. DeoC type 2 subfamily.

The protein resides in the cytoplasm. It carries out the reaction 2-deoxy-D-ribose 5-phosphate = D-glyceraldehyde 3-phosphate + acetaldehyde. The protein operates within carbohydrate degradation; 2-deoxy-D-ribose 1-phosphate degradation; D-glyceraldehyde 3-phosphate and acetaldehyde from 2-deoxy-alpha-D-ribose 1-phosphate: step 2/2. In terms of biological role, catalyzes a reversible aldol reaction between acetaldehyde and D-glyceraldehyde 3-phosphate to generate 2-deoxy-D-ribose 5-phosphate. This Shewanella sp. (strain ANA-3) protein is Deoxyribose-phosphate aldolase.